We begin with the raw amino-acid sequence, 241 residues long: Pyridoxine 5'-phosphate synthase (241 aa).

Asn10 is a 3-amino-2-oxopropyl phosphate binding site. Residue 12 to 13 coordinates 1-deoxy-D-xylulose 5-phosphate; the sequence is DH. Arg21 serves as a coordination point for 3-amino-2-oxopropyl phosphate. His48 acts as the Proton acceptor in catalysis. Positions 50 and 55 each coordinate 1-deoxy-D-xylulose 5-phosphate. Residue Glu75 is the Proton acceptor of the active site. Residue Thr105 participates in 1-deoxy-D-xylulose 5-phosphate binding. The active-site Proton donor is the His195. 3-amino-2-oxopropyl phosphate-binding positions include Gly196 and 217 to 218; that span reads GH.

It belongs to the PNP synthase family. As to quaternary structure, homooctamer; tetramer of dimers.

The protein localises to the cytoplasm. It catalyses the reaction 3-amino-2-oxopropyl phosphate + 1-deoxy-D-xylulose 5-phosphate = pyridoxine 5'-phosphate + phosphate + 2 H2O + H(+). Its pathway is cofactor biosynthesis; pyridoxine 5'-phosphate biosynthesis; pyridoxine 5'-phosphate from D-erythrose 4-phosphate: step 5/5. Functionally, catalyzes the complicated ring closure reaction between the two acyclic compounds 1-deoxy-D-xylulose-5-phosphate (DXP) and 3-amino-2-oxopropyl phosphate (1-amino-acetone-3-phosphate or AAP) to form pyridoxine 5'-phosphate (PNP) and inorganic phosphate. The polypeptide is Pyridoxine 5'-phosphate synthase (Bdellovibrio bacteriovorus (strain ATCC 15356 / DSM 50701 / NCIMB 9529 / HD100)).